Consider the following 313-residue polypeptide: Protoheme IX farnesyltransferase (313 aa).

A run of 9 helical transmembrane segments spans residues 33–53 (IALM…PVML), 59–79 (MPSW…AGSA), 107–127 (VEPA…TLMF), 129–149 (LLVN…YVFV), 162–182 (IVIG…AVTG), 188–208 (AVLL…ALAI), 212–232 (DDYA…EVVT), 252–272 (VADI…WFVA), and 292–312 (LFHM…AAAL).

The protein belongs to the UbiA prenyltransferase family. Protoheme IX farnesyltransferase subfamily.

The protein localises to the cell membrane. The catalysed reaction is heme b + (2E,6E)-farnesyl diphosphate + H2O = Fe(II)-heme o + diphosphate. The protein operates within porphyrin-containing compound metabolism; heme O biosynthesis; heme O from protoheme: step 1/1. Converts heme B (protoheme IX) to heme O by substitution of the vinyl group on carbon 2 of heme B porphyrin ring with a hydroxyethyl farnesyl side group. This is Protoheme IX farnesyltransferase from Parafrankia sp. (strain EAN1pec).